A 481-amino-acid polypeptide reads, in one-letter code: UDP-glycosyltransferase 73B3 (481 aa).

H21 (proton acceptor) is an active-site residue. H21 lines the an anthocyanidin pocket. Catalysis depends on D132, which acts as the Charge relay. The UDP-alpha-D-glucose site is built by A355, Q357, H372, W375, N376, S377, and E380. An anthocyanidin is bound at residue A395. Positions 396 and 397 each coordinate UDP-alpha-D-glucose.

The protein belongs to the UDP-glycosyltransferase family. Expressed in roots and flowers.

The enzyme catalyses a flavonol + UDP-alpha-D-glucose = a flavonol 3-O-beta-D-glucoside + UDP + H(+). Possesses quercetin 3-O-glucosyltransferase activity in vitro. Also active in vitro on benzoates and benzoate derivatives. Involved in stress or defense responses. This is UDP-glycosyltransferase 73B3 (UGT73B3) from Arabidopsis thaliana (Mouse-ear cress).